A 219-amino-acid polypeptide reads, in one-letter code: Redox-sensing transcriptional repressor Rex (219 aa).

Residues 17 to 56 (LYYRIFKRFHRENIVKTSSKQIAEAIGIDPATVRRDFSYF) constitute a DNA-binding region (H-T-H motif). 91 to 96 (GVGNIG) contributes to the NAD(+) binding site.

It belongs to the transcriptional regulatory Rex family. As to quaternary structure, homodimer.

Its subcellular location is the cytoplasm. In terms of biological role, modulates transcription in response to changes in cellular NADH/NAD(+) redox state. This is Redox-sensing transcriptional repressor Rex from Streptococcus thermophilus (strain ATCC BAA-491 / LMD-9).